The chain runs to 444 residues: Maltoporin (444 aa).

The N-terminal stretch at Met-1–Ala-24 is a signal peptide.

The protein belongs to the porin LamB (TC 1.B.3) family. As to quaternary structure, homotrimer formed of three 18-stranded antiparallel beta-barrels, containing three independent channels.

The protein localises to the cell outer membrane. The catalysed reaction is beta-maltose(in) = beta-maltose(out). In terms of biological role, involved in the transport of maltose and maltodextrins. The protein is Maltoporin of Enterobacter sp. (strain 638).